Consider the following 419-residue polypeptide: Gamma-glutamyl phosphate reductase (419 aa).

Belongs to the gamma-glutamyl phosphate reductase family.

It localises to the cytoplasm. It carries out the reaction L-glutamate 5-semialdehyde + phosphate + NADP(+) = L-glutamyl 5-phosphate + NADPH + H(+). The protein operates within amino-acid biosynthesis; L-proline biosynthesis; L-glutamate 5-semialdehyde from L-glutamate: step 2/2. Catalyzes the NADPH-dependent reduction of L-glutamate 5-phosphate into L-glutamate 5-semialdehyde and phosphate. The product spontaneously undergoes cyclization to form 1-pyrroline-5-carboxylate. The polypeptide is Gamma-glutamyl phosphate reductase (Maridesulfovibrio salexigens (strain ATCC 14822 / DSM 2638 / NCIMB 8403 / VKM B-1763) (Desulfovibrio salexigens)).